Consider the following 231-residue polypeptide: Heptaprenylglyceryl phosphate synthase (231 aa).

Lysine 12 contributes to the sn-glycerol 1-phosphate binding site. Mg(2+)-binding residues include aspartate 14 and threonine 40. Residues 159–164 (YMEYSG), glycine 189, and 209–210 (GN) each bind sn-glycerol 1-phosphate.

It belongs to the GGGP/HepGP synthase family. Group I subfamily. Homodimer. Mg(2+) is required as a cofactor.

The enzyme catalyses sn-glycerol 1-phosphate + all-trans-heptaprenyl diphosphate = 3-heptaprenyl-sn-glycero-1-phosphate + diphosphate. The protein operates within membrane lipid metabolism; glycerophospholipid metabolism. Its function is as follows. Prenyltransferase that catalyzes in vivo the transfer of the heptaprenyl moiety of heptaprenyl pyrophosphate (HepPP; 35 carbon atoms) to the C3 hydroxyl of sn-glycerol-1-phosphate (G1P), producing heptaprenylglyceryl phosphate (HepGP). This reaction is an ether-bond-formation step in the biosynthesis of archaea-type G1P-based membrane lipids found in Bacillales. The protein is Heptaprenylglyceryl phosphate synthase of Brevibacillus brevis (strain 47 / JCM 6285 / NBRC 100599).